The following is a 229-amino-acid chain: Putative germin-like protein 3-4 (229 aa).

The N-terminal stretch at 1-31 (MEHSFKTITAGVVFVVLLLQQAPVLIRATDA) is a signal peptide. The cysteines at positions 38 and 53 are disulfide-linked. Residues 67 to 219 (SKIATGGDVN…ALRVDTGVVE (153 aa)) form the Cupin type-1 domain. N-linked (GlcNAc...) asparagine glycans are attached at residues Asn-80 and Asn-83. Mn(2+)-binding residues include His-116, His-118, Glu-123, and His-165.

This sequence belongs to the germin family. In terms of assembly, oligomer (believed to be a pentamer but probably hexamer).

It localises to the secreted. The protein resides in the extracellular space. Its subcellular location is the apoplast. Functionally, may play a role in plant defense. Probably has no oxalate oxidase activity even if the active site is conserved. The chain is Putative germin-like protein 3-4 from Oryza sativa subsp. japonica (Rice).